A 290-amino-acid chain; its full sequence is Glycine--tRNA ligase alpha subunit (290 aa).

It belongs to the class-II aminoacyl-tRNA synthetase family. As to quaternary structure, tetramer of two alpha and two beta subunits.

It is found in the cytoplasm. The catalysed reaction is tRNA(Gly) + glycine + ATP = glycyl-tRNA(Gly) + AMP + diphosphate. This chain is Glycine--tRNA ligase alpha subunit, found in Fusobacterium nucleatum subsp. nucleatum (strain ATCC 25586 / DSM 15643 / BCRC 10681 / CIP 101130 / JCM 8532 / KCTC 2640 / LMG 13131 / VPI 4355).